Reading from the N-terminus, the 270-residue chain is Shikimate dehydrogenase (NADP(+)) (270 aa).

Shikimate is bound by residues 15–17 (SKS) and Thr-62. The active-site Proton acceptor is the Lys-66. Shikimate contacts are provided by Asn-87 and Asp-102. NADP(+) contacts are provided by residues 127 to 131 (GAGGA), 151 to 156 (NRTVAR), and Met-214. Shikimate is bound at residue Tyr-216. Gly-238 serves as a coordination point for NADP(+).

The protein belongs to the shikimate dehydrogenase family. In terms of assembly, homodimer.

It catalyses the reaction shikimate + NADP(+) = 3-dehydroshikimate + NADPH + H(+). It participates in metabolic intermediate biosynthesis; chorismate biosynthesis; chorismate from D-erythrose 4-phosphate and phosphoenolpyruvate: step 4/7. In terms of biological role, involved in the biosynthesis of the chorismate, which leads to the biosynthesis of aromatic amino acids. Catalyzes the reversible NADPH linked reduction of 3-dehydroshikimate (DHSA) to yield shikimate (SA). The polypeptide is Shikimate dehydrogenase (NADP(+)) (Alkalilimnicola ehrlichii (strain ATCC BAA-1101 / DSM 17681 / MLHE-1)).